We begin with the raw amino-acid sequence, 327 residues long: Biotin synthase (327 aa).

Residues 49-273 form the Radical SAM core domain; that stretch reads FNKDKIDLCS…ICIARIALPD (225 aa). Positions 67, 71, and 74 each coordinate [4Fe-4S] cluster. Residues Ser110, Cys142, Cys201, and Arg277 each coordinate [2Fe-2S] cluster.

Belongs to the radical SAM superfamily. Biotin synthase family. In terms of assembly, homodimer. Requires [4Fe-4S] cluster as cofactor. [2Fe-2S] cluster is required as a cofactor.

The enzyme catalyses (4R,5S)-dethiobiotin + (sulfur carrier)-SH + 2 reduced [2Fe-2S]-[ferredoxin] + 2 S-adenosyl-L-methionine = (sulfur carrier)-H + biotin + 2 5'-deoxyadenosine + 2 L-methionine + 2 oxidized [2Fe-2S]-[ferredoxin]. Its pathway is cofactor biosynthesis; biotin biosynthesis; biotin from 7,8-diaminononanoate: step 2/2. Catalyzes the conversion of dethiobiotin (DTB) to biotin by the insertion of a sulfur atom into dethiobiotin via a radical-based mechanism. The chain is Biotin synthase from Methanococcus maripaludis (strain C6 / ATCC BAA-1332).